The chain runs to 461 residues: GTPase Der (461 aa).

2 consecutive EngA-type G domains span residues 9 to 171 (KTIA…NLNK) and 200 to 371 (IQVG…ECFS). GTP is bound by residues 15 to 22 (GQPNVGKS), 62 to 66 (DTGGM), 123 to 126 (NKID), 206 to 213 (GRVNVGKS), 253 to 257 (DTAGI), and 317 to 320 (NKWD). The 85-residue stretch at 372-456 (KRIPTSLLNS…PLILNAKDKK (85 aa)) folds into the KH-like domain.

The protein belongs to the TRAFAC class TrmE-Era-EngA-EngB-Septin-like GTPase superfamily. EngA (Der) GTPase family. Associates with the 50S ribosomal subunit.

GTPase that plays an essential role in the late steps of ribosome biogenesis. This is GTPase Der from Helicobacter pylori (strain HPAG1).